A 138-amino-acid chain; its full sequence is Small ribosomal subunit protein uS11c (138 aa).

Residues 1–22 are disordered; it reads MTKPIPRIGSRRSGRIGSRKAG. Positions 9–22 are enriched in basic residues; that stretch reads GSRRSGRIGSRKAG.

Belongs to the universal ribosomal protein uS11 family. Part of the 30S ribosomal subunit.

The protein localises to the plastid. It is found in the chloroplast. In Piper cenocladum (Ant piper), this protein is Small ribosomal subunit protein uS11c.